The following is a 350-amino-acid chain: 4-hydroxy-2-oxovalerate aldolase 2 (350 aa).

The 253-residue stretch at 8 to 260 (ITVHDMTLRD…ETGVDVFKIQ (253 aa)) folds into the Pyruvate carboxyltransferase domain. A substrate-binding site is contributed by 16-17 (RD). D17 is a Mn(2+) binding site. The Proton acceptor role is filled by H20. Positions 170 and 199 each coordinate substrate. Mn(2+) contacts are provided by H199 and H201. Y290 contacts substrate.

Belongs to the 4-hydroxy-2-oxovalerate aldolase family.

It catalyses the reaction (S)-4-hydroxy-2-oxopentanoate = acetaldehyde + pyruvate. This chain is 4-hydroxy-2-oxovalerate aldolase 2 (tesG), found in Comamonas testosteroni (Pseudomonas testosteroni).